Here is a 627-residue protein sequence, read N- to C-terminus: BURP domain-containing protein 12 (627 aa).

The N-terminal stretch at 1–25 is a signal peptide; sequence MASPPHLPLLLLLLVVVCNAAGGDG. N-linked (GlcNAc...) asparagine glycosylation is found at asparagine 119, asparagine 175, asparagine 251, asparagine 366, asparagine 384, and asparagine 530. The 212-residue stretch at 415-626 folds into the BURP domain; it reads FFRETELVSG…FEGDMTWTVA (212 aa).

As to expression, expressed in stems, leaves, shoot and panicles.

This Oryza sativa subsp. japonica (Rice) protein is BURP domain-containing protein 12 (BURP12).